The primary structure comprises 451 residues: MTLYQLGNGKKFYTLTFGCQMNEHDSEVLAGMLDQMGFEKAASEEEADLLIINTCAVREKAEQKVLGKIGTLRYLKENKPDMKIAIGGCMVQQEHVANKIYRDFTHVDIIFGTHNINRFPQLLEHVMQKGKRVKEISQDDSQVFENLPHKREDSIKAWVVISYGCDNYCKYCIVPYVRGQQRSRDPEHIKYEVEKLAKEGLKEITLLGQNVNSYGKDLDQNISFTNLLEELSKIEGIERIRFMTSHPKDFDKELITTLKESNKICEHFHLPVQAGSNKILKKMGRGYTREHYVDIVNDIRAELPNASITTDIIVGYPGEEEEDFQETLDLVQNVKFDSAFTFVYSKRSGTPAAEMAEQVDEQTKKGRIQKLISVQQEISEQRNKDLENTVQRILVEGVSKNNEDMLSGRTRTDKLVHFPGDKELIGELVDVKITRGHSWNLYGEIFEDSLT.

Residues 10–128 enclose the MTTase N-terminal domain; that stretch reads KKFYTLTFGC…FPQLLEHVMQ (119 aa). [4Fe-4S] cluster is bound by residues C19, C55, C89, C165, C169, and C172. Positions 151 to 381 constitute a Radical SAM core domain; the sequence is REDSIKAWVV…ISVQQEISEQ (231 aa). A TRAM domain is found at 384–447; sequence KDLENTVQRI…SWNLYGEIFE (64 aa).

It belongs to the methylthiotransferase family. MiaB subfamily. In terms of assembly, monomer. The cofactor is [4Fe-4S] cluster.

It is found in the cytoplasm. The enzyme catalyses N(6)-dimethylallyladenosine(37) in tRNA + (sulfur carrier)-SH + AH2 + 2 S-adenosyl-L-methionine = 2-methylsulfanyl-N(6)-dimethylallyladenosine(37) in tRNA + (sulfur carrier)-H + 5'-deoxyadenosine + L-methionine + A + S-adenosyl-L-homocysteine + 2 H(+). Catalyzes the methylthiolation of N6-(dimethylallyl)adenosine (i(6)A), leading to the formation of 2-methylthio-N6-(dimethylallyl)adenosine (ms(2)i(6)A) at position 37 in tRNAs that read codons beginning with uridine. This Natranaerobius thermophilus (strain ATCC BAA-1301 / DSM 18059 / JW/NM-WN-LF) protein is tRNA-2-methylthio-N(6)-dimethylallyladenosine synthase.